Here is a 284-residue protein sequence, read N- to C-terminus: Trimeric intracellular cation channel type B-A (284 aa).

The Lumenal portion of the chain corresponds to 1 to 15 (MESLSELSVQFSQLS). The chain crosses the membrane as a helical span at residues 16–33 (MFPFFDMAHYVVSVMSAR). Over 34-46 (EQAGALDIAARSP) the chain is Cytoplasmic. A helical transmembrane segment spans residues 47 to 68 (MASWFSAMLYCFGGGILSSILL). Residues 69 to 79 (AEPPIAVLSNT) lie on the Lumenal side of the membrane. The chain crosses the membrane as a helical span at residues 80-99 (TNIMLASTIWYMVYYFPYDL). At 100-102 (FYN) the chain is on the cytoplasmic side. Residues 103-121 (CFFFLPIRLIIAGMKEVTR) traverse the membrane as a helical segment. A 1,2-diacyl-sn-glycero-3-phospho-(1D-myo-inositol-4,5-bisphosphate) is bound by residues lysine 117 and arginine 121. Over 122-137 (TWKILSGVTHAHSHYK) the chain is Lumenal. The chain crosses the membrane as a helical span at residues 138–155 (DALLVMITIGWARGAGGG). At 156–177 (LISNFEQLVRGVWKPESNEFLK) the chain is on the cytoplasmic side. The chain crosses the membrane as a helical span at residues 178 to 195 (MSYPVKVTLIGAVLFTLQ). Topologically, residues 196-206 (HGHYLPISRHN) are lumenal. Residues 207–224 (LMLIYTMFLVLIKVTMML) traverse the membrane as a helical segment. At 225–284 (THSTASPFLPLETPLQRILFGQRQKPSEVRQSASSSGAKGKPSKKTLDKDSGEQSKKKDS) the chain is on the cytoplasmic side. Positions 246–284 (QRQKPSEVRQSASSSGAKGKPSKKTLDKDSGEQSKKKDS) are disordered. A compositionally biased stretch (basic and acidic residues) spans 269 to 284 (KTLDKDSGEQSKKKDS).

Belongs to the TMEM38 family. Homotrimer; conformation seems to be controled by binding to diacylglycerol (DAG).

It localises to the endoplasmic reticulum membrane. The catalysed reaction is K(+)(in) = K(+)(out). Channel activity is activated by increased cytosolic Ca(2+) levels and blocked by luminal high Ca(2+) levels. Its function is as follows. Intracellular monovalent cation channel required for maintenance of rapid intracellular calcium release. Acts as a potassium counter-ion channel that functions in synchronization with calcium release from intracellular stores. Activated by increased cytosolic Ca(2+) levels. This chain is Trimeric intracellular cation channel type B-A (tmem38b-a), found in Xenopus laevis (African clawed frog).